We begin with the raw amino-acid sequence, 141 residues long: Probable mobile endonuclease E (141 aa).

Residues 115–141 (KMSKSENRSAFNRRNQTQNIGGNQRKG) form a disordered region. Positions 122–141 (RSAFNRRNQTQNIGGNQRKG) are enriched in polar residues.

The chain is Probable mobile endonuclease E (mobE) from Escherichia coli (Bacteriophage T4).